Here is a 74-residue protein sequence, read N- to C-terminus: Putative membrane protein insertion efficiency factor (74 aa).

This sequence belongs to the UPF0161 family.

It localises to the cell membrane. Could be involved in insertion of integral membrane proteins into the membrane. The protein is Putative membrane protein insertion efficiency factor of Bacillus pumilus (strain SAFR-032).